The sequence spans 360 residues: MIIWLAELLQPYLSFFRLFEYLSFRAILSVLTALGLSLWMGPIMIKRLQMLQIGQVVRNEGPESHFSKRGTPTMGGIMILAAISITILLWTDLSNPYVWAVLTVLLGYGAIGFVDDYRKVVRKNTDGLIARWKYFWQSLIAFVVAFALYAYGKDTAATQLVVPFFKDIMPQLGLMYIILTYFVIVGTSNAVNLTDGLDGLAIMPTVLVAAGFAVIAWATGNVNFSEYLHIPYLPHASELVVVCTAIVGAGLGFLWFNTYPAQVFMGDVGSLALGGALGTIAVLVRQELILVIMGGVFVMETLSVILQVGSYKLRGQRIFRMAPIHHHYELKGWPEPRVIVRFWIISMVLVLIGLATLKVR.

The next 10 helical transmembrane spans lie at 26–46, 70–90, 94–114, 132–152, 168–188, 199–219, 236–256, 263–283, 288–308, and 338–358; these read AILSVLTALGLSLWMGPIMIK, GTPTMGGIMILAAISITILLW, SNPYVWAVLTVLLGYGAIGFV, WKYFWQSLIAFVVAFALYAYG, IMPQLGLMYIILTYFVIVGTS, GLAIMPTVLVAAGFAVIAWAT, ASELVVVCTAIVGAGLGFLWF, VFMGDVGSLALGGALGTIAVL, LILVIMGGVFVMETLSVILQV, and VIVRFWIISMVLVLIGLATLK.

It belongs to the glycosyltransferase 4 family. MraY subfamily. Mg(2+) is required as a cofactor.

The protein resides in the cell inner membrane. It carries out the reaction UDP-N-acetyl-alpha-D-muramoyl-L-alanyl-gamma-D-glutamyl-meso-2,6-diaminopimeloyl-D-alanyl-D-alanine + di-trans,octa-cis-undecaprenyl phosphate = di-trans,octa-cis-undecaprenyl diphospho-N-acetyl-alpha-D-muramoyl-L-alanyl-D-glutamyl-meso-2,6-diaminopimeloyl-D-alanyl-D-alanine + UMP. It functions in the pathway cell wall biogenesis; peptidoglycan biosynthesis. Its function is as follows. Catalyzes the initial step of the lipid cycle reactions in the biosynthesis of the cell wall peptidoglycan: transfers peptidoglycan precursor phospho-MurNAc-pentapeptide from UDP-MurNAc-pentapeptide onto the lipid carrier undecaprenyl phosphate, yielding undecaprenyl-pyrophosphoryl-MurNAc-pentapeptide, known as lipid I. In Vibrio campbellii (strain ATCC BAA-1116), this protein is Phospho-N-acetylmuramoyl-pentapeptide-transferase.